The primary structure comprises 210 residues: Selenoprotein T2 (210 aa).

Residues 1-21 (MAEYSQTGILTALLLFTVVTV) form the signal peptide. Residues 62–65 (CISU) constitute a cross-link (cysteinyl-selenocysteine (Cys-Sec)). Residue selenocysteine 65 is a non-standard amino acid, selenocysteine.

It belongs to the SelWTH family. Selenoprotein T subfamily. May contain a selenide-sulfide bond between Cys-62 and Sec-65. This bond is speculated to serve as redox-active pair. In terms of tissue distribution, widely expressed in the embryo.

The polypeptide is Selenoprotein T2 (Danio rerio (Zebrafish)).